The sequence spans 1247 residues: DNA-directed RNA polymerase subunit beta (1247 aa).

This sequence belongs to the RNA polymerase beta chain family. In terms of assembly, in plastids the minimal PEP RNA polymerase catalytic core is composed of four subunits: alpha, beta, beta', and beta''. When a (nuclear-encoded) sigma factor is associated with the core the holoenzyme is formed, which can initiate transcription.

The protein resides in the plastid. It catalyses the reaction RNA(n) + a ribonucleoside 5'-triphosphate = RNA(n+1) + diphosphate. Its function is as follows. DNA-dependent RNA polymerase catalyzes the transcription of DNA into RNA using the four ribonucleoside triphosphates as substrates. This is DNA-directed RNA polymerase subunit beta (rpoB) from Helicosporidium sp. subsp. Simulium jonesii (Green alga).